A 270-amino-acid chain; its full sequence is Thymidylate synthase (270 aa).

DUMP-binding positions include Arg28 and 133–134 (RR). Catalysis depends on Cys153, which acts as the Nucleophile. Residues 173–176 (RSAD), Asn184, and 214–216 (HIY) each bind dUMP. Asp176 is a (6R)-5,10-methylene-5,6,7,8-tetrahydrofolate binding site. (6R)-5,10-methylene-5,6,7,8-tetrahydrofolate is bound at residue Ala269.

The protein belongs to the thymidylate synthase family. Bacterial-type ThyA subfamily. Homodimer.

It is found in the cytoplasm. It catalyses the reaction dUMP + (6R)-5,10-methylene-5,6,7,8-tetrahydrofolate = 7,8-dihydrofolate + dTMP. It participates in pyrimidine metabolism; dTTP biosynthesis. Its function is as follows. Catalyzes the reductive methylation of 2'-deoxyuridine-5'-monophosphate (dUMP) to 2'-deoxythymidine-5'-monophosphate (dTMP) while utilizing 5,10-methylenetetrahydrofolate (mTHF) as the methyl donor and reductant in the reaction, yielding dihydrofolate (DHF) as a by-product. This enzymatic reaction provides an intracellular de novo source of dTMP, an essential precursor for DNA biosynthesis. In Corynebacterium diphtheriae (strain ATCC 700971 / NCTC 13129 / Biotype gravis), this protein is Thymidylate synthase.